The primary structure comprises 448 residues: D-inositol 3-phosphate glycosyltransferase (448 aa).

The segment at 1-21 is disordered; it reads MAEQHTGVGRQRGARPWPRPR. Histidine 29 is a binding site for 1D-myo-inositol 3-phosphate. UDP-N-acetyl-alpha-D-glucosamine-binding positions include 35-36 and glycine 43; that span reads QP. 1D-myo-inositol 3-phosphate contacts are provided by residues 40–45, lysine 98, tyrosine 131, threonine 155, and arginine 175; that span reads DAGGMN. UDP-N-acetyl-alpha-D-glucosamine is bound by residues arginine 255, lysine 260, and glutamine 321. Mg(2+) contacts are provided by tyrosine 330, arginine 331, and alanine 333. The UDP-N-acetyl-alpha-D-glucosamine site is built by glutamate 343 and glutamate 351. Threonine 357 contacts Mg(2+).

This sequence belongs to the glycosyltransferase group 1 family. MshA subfamily. Homodimer.

The catalysed reaction is 1D-myo-inositol 3-phosphate + UDP-N-acetyl-alpha-D-glucosamine = 1D-myo-inositol 2-acetamido-2-deoxy-alpha-D-glucopyranoside 3-phosphate + UDP + H(+). In terms of biological role, catalyzes the transfer of a N-acetyl-glucosamine moiety to 1D-myo-inositol 3-phosphate to produce 1D-myo-inositol 2-acetamido-2-deoxy-glucopyranoside 3-phosphate in the mycothiol biosynthesis pathway. This is D-inositol 3-phosphate glycosyltransferase from Salinispora arenicola (strain CNS-205).